Consider the following 239-residue polypeptide: MSKQVAHSFSSEDFSFIKQKLAREAVALVEPGMRVGLGSGSTAREFILALGERVRNERLAITAVASSRISHLLAQALGIPFLDPALSQELDLVVDGADEVDANLRMIKGGGGALFREKILLQSGKRNIILVDERKLVSVLGTFPLPIEISPFGCSSVEKVLNQQGYIGDWRKTSHGERFITDNGNYIYDVSSPDSYPHPEEDLIRLLQIRGIIDVGFVIAKAEVWVGYADGTVVRKEIT.

Residues 39-42 (SGST), 95-98 (DGAD), and 108-111 (KGGG) contribute to the substrate site. Catalysis depends on Glu117, which acts as the Proton acceptor. Lys135 serves as a coordination point for substrate.

The protein belongs to the ribose 5-phosphate isomerase family. Homodimer.

The catalysed reaction is aldehydo-D-ribose 5-phosphate = D-ribulose 5-phosphate. Its pathway is carbohydrate degradation; pentose phosphate pathway; D-ribose 5-phosphate from D-ribulose 5-phosphate (non-oxidative stage): step 1/1. In terms of biological role, catalyzes the reversible conversion of ribose-5-phosphate to ribulose 5-phosphate. This is Ribose-5-phosphate isomerase A from Chlamydia muridarum (strain MoPn / Nigg).